A 663-amino-acid chain; its full sequence is UvrABC system protein B (663 aa).

Residues 30 to 414 (EGIKAGKRHQ…IEHTDKMVEQ (385 aa)) enclose the Helicase ATP-binding domain. Position 43–50 (43–50 (GATGTGKT)) interacts with ATP. The Beta-hairpin signature appears at 96–119 (YYDYYQPEAYVPSTDTFIEKDASI). A Helicase C-terminal domain is found at 434–600 (QIDDLLSEIQ…TINKKIHDLI (167 aa)). The UVR domain occupies 627–662 (QKTIDNIEKEMKQAAKDLDFEKATELRDMLFELKAE).

Belongs to the UvrB family. In terms of assembly, forms a heterotetramer with UvrA during the search for lesions. Interacts with UvrC in an incision complex.

The protein resides in the cytoplasm. Functionally, the UvrABC repair system catalyzes the recognition and processing of DNA lesions. A damage recognition complex composed of 2 UvrA and 2 UvrB subunits scans DNA for abnormalities. Upon binding of the UvrA(2)B(2) complex to a putative damaged site, the DNA wraps around one UvrB monomer. DNA wrap is dependent on ATP binding by UvrB and probably causes local melting of the DNA helix, facilitating insertion of UvrB beta-hairpin between the DNA strands. Then UvrB probes one DNA strand for the presence of a lesion. If a lesion is found the UvrA subunits dissociate and the UvrB-DNA preincision complex is formed. This complex is subsequently bound by UvrC and the second UvrB is released. If no lesion is found, the DNA wraps around the other UvrB subunit that will check the other stand for damage. The chain is UvrABC system protein B from Staphylococcus aureus (strain MSSA476).